We begin with the raw amino-acid sequence, 261 residues long: Small ribosomal subunit protein mS23 (261 aa).

The tract at residues 234–261 is disordered; the sequence is NPSESWATDEKDPKKNDDIEEDVEEIKL. A compositionally biased stretch (basic and acidic residues) spans 241 to 250; that stretch reads TDEKDPKKND. The segment covering 251–261 has biased composition (acidic residues); the sequence is DIEEDVEEIKL.

This sequence belongs to the mitochondrion-specific ribosomal protein mS23 family. In terms of assembly, component of the mitochondrial small ribosomal subunit.

It is found in the mitochondrion. The polypeptide is Small ribosomal subunit protein mS23 (RSM25) (Vanderwaltozyma polyspora (strain ATCC 22028 / DSM 70294 / BCRC 21397 / CBS 2163 / NBRC 10782 / NRRL Y-8283 / UCD 57-17) (Kluyveromyces polysporus)).